Here is a 171-residue protein sequence, read N- to C-terminus: 3-hydroxydecanoyl-[acyl-carrier-protein] dehydratase (171 aa).

Residue H70 is part of the active site.

This sequence belongs to the thioester dehydratase family. FabA subfamily. In terms of assembly, homodimer.

The protein resides in the cytoplasm. It carries out the reaction a (3R)-hydroxyacyl-[ACP] = a (2E)-enoyl-[ACP] + H2O. The catalysed reaction is (3R)-hydroxydecanoyl-[ACP] = (2E)-decenoyl-[ACP] + H2O. The enzyme catalyses (2E)-decenoyl-[ACP] = (3Z)-decenoyl-[ACP]. It functions in the pathway lipid metabolism; fatty acid biosynthesis. In terms of biological role, necessary for the introduction of cis unsaturation into fatty acids. Catalyzes the dehydration of (3R)-3-hydroxydecanoyl-ACP to E-(2)-decenoyl-ACP and then its isomerization to Z-(3)-decenoyl-ACP. Can catalyze the dehydratase reaction for beta-hydroxyacyl-ACPs with saturated chain lengths up to 16:0, being most active on intermediate chain length. This Mesorhizobium japonicum (strain LMG 29417 / CECT 9101 / MAFF 303099) (Mesorhizobium loti (strain MAFF 303099)) protein is 3-hydroxydecanoyl-[acyl-carrier-protein] dehydratase.